The following is a 491-amino-acid chain: MAENLAALDDDEAELRAATLRAGLDDYDLDEEDAALLSGEYGDEGDEGPLKLDPVLAIIGRPNVGKSTLVNRILGRREAVVEDTPGVTRDRVMYSARWNGRNFTLVDTGGWEHDAKGIHARVAEQAEMAVELADAVLFVVDSAVGATATDEGVMKMLRKSKKPVIMVANKVDDFAQEADSATLWGLGFGEPYPVSALHGRGVADLLDHVMDTLPEYSLVDGVERSGGPRRIALIGRPNVGKSSLLNKLAGSERVVVDPLAGTTRDPVDEFIELGDRTWRFVDTAGIRRRQHMAQGADFYASLRTQAALEKAEVAVVLLAVDEVLSEQDVRILQLAIESGRALVLAFNKWDLLDDERRRYLEREIEQDLAHVEWAPRVNISAKTGWHKDRLVPALDIALESWDRRIPTGRLNAFLGELVAAHPHPVRGGKQPRILFGTQASSRPPKFVLFTTGFLDPGYRRFITRRLRETFGFEGTPIEVNMRVREKRGKKR.

EngA-type G domains follow at residues 54–217 (PVLA…PEYS) and 229–402 (RRIA…ESWD). GTP-binding positions include 60–67 (GRPNVGKS), 107–111 (DTGGW), 169–172 (NKVD), 235–242 (GRPNVGKS), 282–286 (DTAGI), and 347–350 (NKWD). The region spanning 403-485 (RRIPTGRLNA…PIEVNMRVRE (83 aa)) is the KH-like domain.

The protein belongs to the TRAFAC class TrmE-Era-EngA-EngB-Septin-like GTPase superfamily. EngA (Der) GTPase family. Associates with the 50S ribosomal subunit.

Functionally, GTPase that plays an essential role in the late steps of ribosome biogenesis. The polypeptide is GTPase Der (Paenarthrobacter aurescens (strain TC1)).